We begin with the raw amino-acid sequence, 163 residues long: Nucleotide-binding protein Mvan_0997 (163 aa).

The protein belongs to the YajQ family.

Nucleotide-binding protein. This chain is Nucleotide-binding protein Mvan_0997, found in Mycolicibacterium vanbaalenii (strain DSM 7251 / JCM 13017 / BCRC 16820 / KCTC 9966 / NRRL B-24157 / PYR-1) (Mycobacterium vanbaalenii).